Consider the following 217-residue polypeptide: Growth factor receptor-bound protein 2 (217 aa).

The residue at position 1 (M1) is an N-acetylmethionine. Residues M1–H58 enclose the SH3 1 domain. N6-acetyllysine is present on residues K6, K50, and K109. In terms of domain architecture, SH2 spans W60–E152. K109 is covalently cross-linked (Glycyl lysine isopeptide (Lys-Gly) (interchain with G-Cter in ubiquitin)). Residues Q156–R215 form the SH3 2 domain. The residue at position 209 (Y209) is a Phosphotyrosine. Phosphothreonine is present on T211.

This sequence belongs to the GRB2/sem-5/DRK family. Associates (via SH2 domain) with activated EGF and PDGF receptors (tyrosine phosphorylated). Interacts with PDGFRA (tyrosine phosphorylated); the interaction may be indirect. Interacts with IRS4 (when Tyr-phosphorylated). Also associates to other cellular Tyr-phosphorylated proteins such as SIT1, IRS1, IRS2, SHC and LNK; probably via the concerted action of both its SH2 and SH3 domains. It also seems to interact with RAS in the signaling pathway leading to DNA synthesis. Interacts with SOS1. Forms a complex with MUC1 and SOS1, through interaction of the SH3 domains with SOS1 and the SH2 domain with phosphorylated MUC1. Interacts with phosphorylated MET. Interacts with phosphorylated TOM1L1. Interacts with the phosphorylated C-terminus of SH2B2. Interacts with phosphorylated SIT1, LAX1, LAT, LAT2 and LIME1 upon TCR and/or BCR activation. Interacts with NISCH, PTPNS1 and REPS2. Interacts with syntrophin SNTA1. Interacts (via SH3 domains) with REPS1. Interacts (via SH3 domains) with PIK3C2B. Interacts with CBL and CBLB. Interacts with AJUBA and CLNK. Interacts (via SH2 domain) with TEK/TIE2 (tyrosine phosphorylated). Interacts with SHB, INPP5D/SHIP1, SKAP1 and SKAP2. Interacts with PTPN11. Interacts with PRNP. Interacts with RALGPS1. Also interacts with HCST. Interacts with KDR. Interacts with FLT1 (tyrosine-phosphorylated). Interacts with GAPT and PTPRE. Interacts (via SH2 domain) with KIF26A. Interacts (via SH3 2) with GAB2. Interacts with ADAM15. Interacts with THEMIS2. Interacts (via SH2 domain) with AXL (phosphorylated). Interacts (via SH2 domain) with KIT (phosphorylated). Interacts with PTPRJ and BCR. Interacts with PTPN23. Interacts with FLT4 (tyrosine phosphorylated). Interacts with EPHB1 and SHC1; activates the MAPK/ERK cascade to regulate cell migration. Part of a complex including TNK2, GRB2 and one receptor tyrosine kinase (RTK) such as AXL and PDGFRL, in which GRB2 promotes RTK recruitment by TNK2. Interacts (via SH2 domain) with CSF1R (tyrosine phosphorylated). Interacts with ERBB4. Interacts with NTRK1 (phosphorylated upon ligand-binding). Interacts with PTK2/FAK1 (tyrosine phosphorylated). Interacts with PTK2B/PYK2 (tyrosine phosphorylated). Interacts (via SH2-domain) with SCIMP; this interaction is dependent on phosphorylation of SCIMP 'Tyr-58'. Interacts (via SH3 domains) with GAREM1 (via proline-rich domain and tyrosine phosphorylated); the interaction occurs upon EGF stimulation. Interacts with DAB2. Interacts with TESPA1. Interacts with THEMIS. Interacts with PLCG1, LAT and THEMIS upon TCR activation in thymocytes; the association is weaker in the absence of TESPA1. Interacts with CD28. Interacts with RAB13; may recruit RAB13 to the leading edge of migrating endothelial cells where it can activate RHOA. Interacts with ASAP3 (phosphorylated form). Interacts (via SH2 domain) with PTPRH (phosphorylated form). Interacts with PTPRO (phosphorylated form). Interacts with PTPRB (phosphorylated form). Interacts (via SH3 domain 2) with PRR14 (via proline-rich region). Interacts with DENND2B. Interacts with SPRY2. Interacts with LRRC8A. Interacts with PEAK1. Interacts with FCRL1. Interacts with PCNA. Interacts with CD19. Interacts with BECN1. Interacts with RAD51; the interaction inhibits RAD51 ATPase to stabilize RAD51-DNA complex at stalled replication forks. Interacts with MRE11; this interaction recruits MRE11 to the DNA damage sites. Interacts with RIPK1 ans SQSTM1; these interactions play a critical role in regulating programmed necrosis. Interacts with AGO2; this interaction is important for the formation of a ternary complex containing GRB2, AGO2 and DICER1. Interacts with TIGIT; this interaction inhibits PI3K and MAPK signaling cascades. Interacts with CD226; this interaction leads to activation of VAV1, PI3K and PLCG1. In terms of assembly, interacts with SOS1; this interaction competes with GRB2 to bind SOS1 via its N-terminal SH3 domain. Post-translationally, phosphorylation of Tyr-209 in the C-terminal SH3 domain reduces its binding to SOS1. Ubiquitinated by RNF173, leading to proteasomal degradation and inhibition of the RAF/MEK/ERK pathway. In the nucleus, polyubiquitinated by RBBP6 at Lys-109 at DNA damage sites. Expressed in macrophages.

The protein localises to the nucleus. It is found in the cytoplasm. It localises to the endosome. The protein resides in the golgi apparatus. Functionally, non-enzymatic adapter protein that plays a pivotal role in precisely regulated signaling cascades from cell surface receptors to cellular responses, including signaling transduction and gene expression. Thus, participates in many biological processes including regulation of innate and adaptive immunity, autophagy, DNA repair or necroptosis. Controls signaling complexes at the T-cell antigen receptor to facilitate the activation, differentiation, and function of T-cells. Mechanistically, engagement of the TCR leads to phosphorylation of the adapter protein LAT, which serves as docking site for GRB2. In turn, GRB2 establishes a a connection with SOS1 that acts as a guanine nucleotide exchange factor and serves as a critical regulator of KRAS/RAF1 leading to MAPKs translocation to the nucleus and activation. Also functions a role in B-cell activation by amplifying Ca(2+) mobilization and activation of the ERK MAP kinase pathway upon recruitment to the phosphorylated B-cell antigen receptor (BCR). Plays a role in switching between autophagy and programmed necrosis upstream of EGFR by interacting with components of necrosomes including RIPK1 and with autophagy regulators SQSTM1 and BECN1. Regulates miRNA biogenesis by forming a functional ternary complex with AGO2 and DICER1. Functions in the replication stress response by protecting DNA at stalled replication forks from MRE11-mediated degradation. Mechanistically, inhibits RAD51 ATPase activity to stabilize RAD51 on stalled replication forks. Additionally, directly recruits and later releases MRE11 at DNA damage sites during the homology-directed repair (HDR) process. Does not bind to phosphorylated epidermal growth factor receptor (EGFR) but inhibits EGF-induced transactivation of a RAS-responsive element. Acts as a dominant negative protein over GRB2 and by suppressing proliferative signals, may trigger active programmed cell death. Mechanistically, inhibits RAS-ERK signaling and downstream cell proliferation by competing with GRB2 for SOS1 binding and thus by regulating SOS1 membrane recruitment. The protein is Growth factor receptor-bound protein 2 (Grb2) of Mus musculus (Mouse).